Consider the following 284-residue polypeptide: Acetylglutamate kinase (284 aa).

Substrate is bound by residues 64-65, Arg-86, and Asn-181; that span reads GG.

This sequence belongs to the acetylglutamate kinase family. ArgB subfamily.

The protein resides in the cytoplasm. It catalyses the reaction N-acetyl-L-glutamate + ATP = N-acetyl-L-glutamyl 5-phosphate + ADP. It functions in the pathway amino-acid biosynthesis; L-arginine biosynthesis; N(2)-acetyl-L-ornithine from L-glutamate: step 2/4. Its function is as follows. Catalyzes the ATP-dependent phosphorylation of N-acetyl-L-glutamate. The protein is Acetylglutamate kinase of Wolinella succinogenes (strain ATCC 29543 / DSM 1740 / CCUG 13145 / JCM 31913 / LMG 7466 / NCTC 11488 / FDC 602W) (Vibrio succinogenes).